A 317-amino-acid polypeptide reads, in one-letter code: Acetyl-coenzyme A carboxylase carboxyl transferase subunit alpha (317 aa).

One can recognise a CoA carboxyltransferase C-terminal domain in the interval 40 to 293; that stretch reads LEVRVREAIV…GDVIANALGE (254 aa).

The protein belongs to the AccA family. Acetyl-CoA carboxylase is a heterohexamer composed of biotin carboxyl carrier protein (AccB), biotin carboxylase (AccC) and two subunits each of ACCase subunit alpha (AccA) and ACCase subunit beta (AccD).

The protein resides in the cytoplasm. The catalysed reaction is N(6)-carboxybiotinyl-L-lysyl-[protein] + acetyl-CoA = N(6)-biotinyl-L-lysyl-[protein] + malonyl-CoA. It participates in lipid metabolism; malonyl-CoA biosynthesis; malonyl-CoA from acetyl-CoA: step 1/1. Functionally, component of the acetyl coenzyme A carboxylase (ACC) complex. First, biotin carboxylase catalyzes the carboxylation of biotin on its carrier protein (BCCP) and then the CO(2) group is transferred by the carboxyltransferase to acetyl-CoA to form malonyl-CoA. The polypeptide is Acetyl-coenzyme A carboxylase carboxyl transferase subunit alpha (Rhizobium etli (strain ATCC 51251 / DSM 11541 / JCM 21823 / NBRC 15573 / CFN 42)).